A 250-amino-acid polypeptide reads, in one-letter code: Cell division protein ZapD (250 aa).

Belongs to the ZapD family. In terms of assembly, interacts with FtsZ.

Its subcellular location is the cytoplasm. Cell division factor that enhances FtsZ-ring assembly. Directly interacts with FtsZ and promotes bundling of FtsZ protofilaments, with a reduction in FtsZ GTPase activity. The chain is Cell division protein ZapD from Photorhabdus laumondii subsp. laumondii (strain DSM 15139 / CIP 105565 / TT01) (Photorhabdus luminescens subsp. laumondii).